The following is a 229-amino-acid chain: Cytosolic-abundant heat soluble protein 107838 (229 aa).

The segment at 1–29 (MSAEAMNMNMNQDAVFIPPPEGEQYERKE) is disordered. The stretch at 109–145 (LSANYQKEVERKTEAYRKQQEVEADKIRKELEKQHLR) forms a coiled coil. CAHS motif regions lie at residues 124-142 (YRKQ…LEKQ) and 161-179 (QKKM…MDRE). Residues 202 to 218 (SSAAGTETGGQVVSESQ) show a composition bias toward polar residues. Residues 202 to 229 (SSAAGTETGGQVVSESQKFTERNRQIKQ) are disordered. Over residues 219 to 229 (KFTERNRQIKQ) the composition is skewed to basic and acidic residues.

Belongs to the Cytosolic-abundant heat soluble protein (CAHS) family.

Its subcellular location is the cytoplasm. In terms of biological role, CAHS proteins are cytosolic heat soluble proteins that seem to contribute to the anhydrobiosis in tardigrades, but their specific mechanisms are yet to be identified. It is possible that protection during anhydrobiosis might occur via the stabilization of vitrifying small molecules such as sugars, but not via the direct glass transition of CAHS proteins themselves. In Paramacrobiotus richtersi (Water bear), this protein is Cytosolic-abundant heat soluble protein 107838.